A 333-amino-acid polypeptide reads, in one-letter code: Glutamyl-tRNA reductase (333 aa).

Residues 60–63, Ser110, 115–117, and Gln121 contribute to the substrate site; these read TCHR and ETE. Residue Cys61 is the Nucleophile of the active site. 189–194 lines the NADP(+) pocket; the sequence is GYSEIN.

It belongs to the glutamyl-tRNA reductase family. As to quaternary structure, homodimer.

The enzyme catalyses (S)-4-amino-5-oxopentanoate + tRNA(Glu) + NADP(+) = L-glutamyl-tRNA(Glu) + NADPH + H(+). It functions in the pathway porphyrin-containing compound metabolism; protoporphyrin-IX biosynthesis; 5-aminolevulinate from L-glutamyl-tRNA(Glu): step 1/2. Its function is as follows. Catalyzes the NADPH-dependent reduction of glutamyl-tRNA(Glu) to glutamate 1-semialdehyde (GSA). The protein is Glutamyl-tRNA reductase of Chlamydia muridarum (strain MoPn / Nigg).